A 158-amino-acid chain; its full sequence is SsrA-binding protein (158 aa).

This sequence belongs to the SmpB family.

It is found in the cytoplasm. Required for rescue of stalled ribosomes mediated by trans-translation. Binds to transfer-messenger RNA (tmRNA), required for stable association of tmRNA with ribosomes. tmRNA and SmpB together mimic tRNA shape, replacing the anticodon stem-loop with SmpB. tmRNA is encoded by the ssrA gene; the 2 termini fold to resemble tRNA(Ala) and it encodes a 'tag peptide', a short internal open reading frame. During trans-translation Ala-aminoacylated tmRNA acts like a tRNA, entering the A-site of stalled ribosomes, displacing the stalled mRNA. The ribosome then switches to translate the ORF on the tmRNA; the nascent peptide is terminated with the 'tag peptide' encoded by the tmRNA and targeted for degradation. The ribosome is freed to recommence translation, which seems to be the essential function of trans-translation. The polypeptide is SsrA-binding protein (Saccharopolyspora erythraea (strain ATCC 11635 / DSM 40517 / JCM 4748 / NBRC 13426 / NCIMB 8594 / NRRL 2338)).